The primary structure comprises 349 residues: Protein RecA (349 aa).

69-76 provides a ligand contact to ATP; that stretch reads GPESSGKT.

This sequence belongs to the RecA family.

It is found in the cytoplasm. Can catalyze the hydrolysis of ATP in the presence of single-stranded DNA, the ATP-dependent uptake of single-stranded DNA by duplex DNA, and the ATP-dependent hybridization of homologous single-stranded DNAs. It interacts with LexA causing its activation and leading to its autocatalytic cleavage. This chain is Protein RecA, found in Crocosphaera subtropica (strain ATCC 51142 / BH68) (Cyanothece sp. (strain ATCC 51142)).